Reading from the N-terminus, the 162-residue chain is uncharacterized protein (162 aa).

Residues 29–50 (CPFCDYTNADAKVVRKHVKSKH) form a C2H2-type zinc finger. The segment at 60–93 (KLESQKSKNNGKKQTGQKKQGKGKKQPKRVRETC) is disordered. A compositionally biased stretch (basic residues) spans 68-87 (NNGKKQTGQKKQGKGKKQPK).

The protein to M.jannaschii MJECS06.

This is an uncharacterized protein from Methanocaldococcus jannaschii (strain ATCC 43067 / DSM 2661 / JAL-1 / JCM 10045 / NBRC 100440) (Methanococcus jannaschii).